A 208-amino-acid chain; its full sequence is Porimin (208 aa).

The N-terminal stretch at 1 to 26 (MGLGARGAWAALLLGTLQVLALLGAA) is a signal peptide. Over 27-166 (HESAAMAASA…EAKKGSKFDT (140 aa)) the chain is Extracellular. The span at 42–57 (GLPHNSSANSTETLQH) shows a compositional bias: polar residues. Residues 42-125 (GLPHNSSANS…PKTTSVSQNT (84 aa)) form a disordered region. N-linked (GlcNAc...) asparagine glycosylation is found at Asn-46, Asn-50, Asn-64, Asn-68, Asn-83, Asn-96, and Asn-106. The span at 65–107 (ETSNSTVKPPTSVASDSSNTTVTTMKPTAASNTTTPGMVSTNM) shows a compositional bias: polar residues. The span at 108 to 122 (TSTTLKSTPKTTSVS) shows a compositional bias: low complexity. N-linked (GlcNAc...) asparagine glycosylation is found at Asn-124 and Asn-138. The chain crosses the membrane as a helical span at residues 167-187 (GSFVGGIVLTLGVLSILYIGC). The Cytoplasmic segment spans residues 188-208 (KMYYSRRGIRYRTIDEHDAII).

It belongs to the CD164 family. In terms of tissue distribution, ubiquitous. Not expressed in ovary. Expressed in keratinocytes.

Its subcellular location is the membrane. In terms of biological role, implicated in oncotic cell death, characterized by cell swelling, organelle swelling, vacuolization and increased membrane permeability. The protein is Porimin (TMEM123) of Homo sapiens (Human).